A 714-amino-acid chain; its full sequence is Fatty acid oxidation complex subunit alpha (714 aa).

An enoyl-CoA hydratase region spans residues 1–190; sequence MEMASAFTLN…KLGLVDDVVP (190 aa). Residues 306-714 form a 3-hydroxyacyl-CoA dehydrogenase region; the sequence is APLNSVGILG…FWKTTATDLQ (409 aa).

This sequence in the N-terminal section; belongs to the enoyl-CoA hydratase/isomerase family. The protein in the central section; belongs to the 3-hydroxyacyl-CoA dehydrogenase family. Heterotetramer of two alpha chains (FadJ) and two beta chains (FadI).

Its subcellular location is the cytoplasm. The enzyme catalyses a (3S)-3-hydroxyacyl-CoA = a (2E)-enoyl-CoA + H2O. The catalysed reaction is a 4-saturated-(3S)-3-hydroxyacyl-CoA = a (3E)-enoyl-CoA + H2O. It catalyses the reaction a (3S)-3-hydroxyacyl-CoA + NAD(+) = a 3-oxoacyl-CoA + NADH + H(+). It carries out the reaction (3S)-3-hydroxybutanoyl-CoA = (3R)-3-hydroxybutanoyl-CoA. It participates in lipid metabolism; fatty acid beta-oxidation. In terms of biological role, catalyzes the formation of a hydroxyacyl-CoA by addition of water on enoyl-CoA. Also exhibits 3-hydroxyacyl-CoA epimerase and 3-hydroxyacyl-CoA dehydrogenase activities. The protein is Fatty acid oxidation complex subunit alpha of Escherichia coli O127:H6 (strain E2348/69 / EPEC).